We begin with the raw amino-acid sequence, 337 residues long: UDP-N-acetylenolpyruvoylglucosamine reductase (337 aa).

Residues 17–186 form the FAD-binding PCMH-type domain; sequence IEAKAKQFIA…TSVIYKLTKR (170 aa). Arginine 162 is an active-site residue. Residue serine 237 is the Proton donor of the active site. Glutamate 333 is an active-site residue.

This sequence belongs to the MurB family. FAD serves as cofactor.

It is found in the cytoplasm. It carries out the reaction UDP-N-acetyl-alpha-D-muramate + NADP(+) = UDP-N-acetyl-3-O-(1-carboxyvinyl)-alpha-D-glucosamine + NADPH + H(+). It functions in the pathway cell wall biogenesis; peptidoglycan biosynthesis. Its function is as follows. Cell wall formation. The chain is UDP-N-acetylenolpyruvoylglucosamine reductase from Flavobacterium johnsoniae (strain ATCC 17061 / DSM 2064 / JCM 8514 / BCRC 14874 / CCUG 350202 / NBRC 14942 / NCIMB 11054 / UW101) (Cytophaga johnsonae).